The following is a 412-amino-acid chain: Divalent metal cation transporter MntH (412 aa).

Residues 1–19 (MTNYRVESSSGRAARKMRL) lie on the Cytoplasmic side of the membrane. The chain crosses the membrane as a helical span at residues 20-39 (ALMGPAFIAAIGYIDPGNFA). At 40–51 (TNIQAGASFGYQ) the chain is on the periplasmic side. The chain crosses the membrane as a helical span at residues 52–71 (LLWVVVWANLMAMLIQILSA). Residues 72-95 (KLGIATGKNLAEQIRDHYPRPVVW) are Cytoplasmic-facing. A helical membrane pass occupies residues 96–118 (FYWVQAEIIAMATDLAEFIGAAI). Residues 119–125 (GFKLILG) lie on the Periplasmic side of the membrane. Residues 126-145 (VSLLQGAVLTGIATFLILML) traverse the membrane as a helical segment. Residues 146 to 155 (QRRGQKPLEK) are Cytoplasmic-facing. A helical transmembrane segment spans residues 156–175 (VIGGLLLFVAAAYIVELIFS). At 176 to 196 (QPNLAQLGKGMVIPSLPTSEA) the chain is on the periplasmic side. The chain crosses the membrane as a helical span at residues 197-220 (VFLAAGVLGATIMPHVIYLHSSLT). The Cytoplasmic segment spans residues 221–238 (QHLHGGSRQQRYSATKWD). Residues 239-258 (VAIAMTIAGFVNLAMMATAA) traverse the membrane as a helical segment. Residues 259 to 276 (AAFHFSGHTGVADLDEAY) are Periplasmic-facing. Residues 277-297 (LTLQPLLSHAAATVFGLSLVA) traverse the membrane as a helical segment. At 298-327 (AGLSSTVVGTLAGQVVMQGFIRFHIPLWVR) the chain is on the cytoplasmic side. A helical transmembrane segment spans residues 328–344 (RTVTMLPSFIVILMGLD). Residues 345-350 (PTRILV) lie on the Periplasmic side of the membrane. Residues 351–370 (MSQVLLSFGIALALVPLLIF) form a helical membrane-spanning segment. Residues 371 to 387 (TSDSKLMGDLVNSKRVK) are Cytoplasmic-facing. The chain crosses the membrane as a helical span at residues 388–406 (QTGWVIVVLVVALNIWLLV). Over 407 to 412 (GTALGL) the chain is Periplasmic.

Belongs to the NRAMP family.

It localises to the cell inner membrane. H(+)-stimulated, divalent metal cation uptake system. The sequence is that of Divalent metal cation transporter MntH from Escherichia fergusonii (strain ATCC 35469 / DSM 13698 / CCUG 18766 / IAM 14443 / JCM 21226 / LMG 7866 / NBRC 102419 / NCTC 12128 / CDC 0568-73).